The chain runs to 503 residues: Probable cytochrome P450 6a19 (503 aa).

A heme-binding site is contributed by Cys-445.

It belongs to the cytochrome P450 family. The cofactor is heme.

The protein localises to the endoplasmic reticulum membrane. It localises to the microsome membrane. Its function is as follows. May be involved in the metabolism of insect hormones and in the breakdown of synthetic insecticides. The protein is Probable cytochrome P450 6a19 (Cyp6a19) of Drosophila melanogaster (Fruit fly).